Reading from the N-terminus, the 403-residue chain is Aspartic protease PEP1 (403 aa).

Residues M1–A20 form the signal peptide. The propeptide at A21–A67 is activation peptide. In terms of domain architecture, Peptidase A1 spans Y82–A400. D98 is an active-site residue. N-linked (GlcNAc...) asparagine glycans are attached at residues N159 and N270. The active site involves D293. C329 and C361 are oxidised to a cystine.

The protein belongs to the peptidase A1 family.

It is found in the secreted. The enzyme catalyses Hydrolysis of proteins with broad specificity. Generally favors hydrophobic residues in P1 and P1', but also accepts Lys in P1, which leads to activation of trypsinogen. Does not clot milk.. Its function is as follows. Secreted aspartic endopeptidase that allows assimilation of proteinaceous substrates. Can catalyze hydrolysis of the major structural proteins of basement membrane, elastin, collagen, and laminin. Thought to play a significant role in virulence. The polypeptide is Aspartic protease PEP1 (PEP1) (Arthroderma benhamiae (strain ATCC MYA-4681 / CBS 112371) (Trichophyton mentagrophytes)).